A 276-amino-acid polypeptide reads, in one-letter code: Cell division protein FtsQ (276 aa).

Residues 1-11 (MQYILKLKYYL) lie on the Cytoplasmic side of the membrane. A helical transmembrane segment spans residues 12–32 (YNITWKLVFICVMLVLLIVGI). Over 33–276 (HKNIKWVCDY…NVSKGSHDYD (244 aa)) the chain is Periplasmic. The POTRA domain occupies 45–115 (GPLSYIIVTG…NTLKINLIEY (71 aa)).

It belongs to the FtsQ/DivIB family. FtsQ subfamily. As to quaternary structure, part of a complex composed of FtsB, FtsL and FtsQ.

It is found in the cell inner membrane. In terms of biological role, essential cell division protein. May link together the upstream cell division proteins, which are predominantly cytoplasmic, with the downstream cell division proteins, which are predominantly periplasmic. May control correct divisome assembly. The protein is Cell division protein FtsQ of Blochmanniella floridana.